A 1445-amino-acid chain; its full sequence is Protein HUA2-LIKE 1 (1445 aa).

A PWWP domain is found at 20–77 (LGDLVLAKVKGFPAWPAKIGQPEDWNQAPDPKKHFVQFYGTGEIGFVTPPDIQPFTSE). Disordered regions lie at residues 133–197 (KYLN…SPDP), 211–302 (TCTD…DLNI), 319–356 (FENE…SKRL), 409–439 (EHTS…SDSD), 460–491 (DDDD…ANAS), 641–685 (GIPK…TSTP), and 797–835 (LTPS…SLSG). 2 stretches are compositionally biased toward polar residues: residues 173 to 187 (QDSS…SPSS) and 211 to 225 (TCTD…NLVN). 3 stretches are compositionally biased toward basic and acidic residues: residues 228–257 (RIIR…RAAT), 274–293 (GQDH…ESSD), and 331–350 (DESK…DQKQ). 2 stretches are compositionally biased toward polar residues: residues 660–673 (RVSS…NQRS) and 797–814 (LTPS…QAGT). Residues 838-979 (EAAISRDTFE…RYIGDLGASG (142 aa)) form the CID domain. The disordered stretch occupies residues 1110-1203 (PATTCATELP…SLPLQPGFAP (94 aa)). The segment covering 1124–1170 (GSPPLPHESPPSPPPQPPSSPPPPSSPPQLAPAPPPSDHCLPPPTAP) has biased composition (pro residues).

Expressed throughout young primordia, and vegetative and reproductive apices.

The protein localises to the nucleus. In terms of biological role, probable transcription factor that acts with partial redundancy with HULK2 and HULK3. Plays diverse and essential roles in the control of plant development, physiology and flowering time. This is Protein HUA2-LIKE 1 from Arabidopsis thaliana (Mouse-ear cress).